The following is a 77-amino-acid chain: U11-lycotoxin-Ls1b (77 aa).

Residues 1-20 form the signal peptide; that stretch reads MKLIIFTGLALFAIVSLIEA. A propeptide spanning residues 21–26 is cleaved from the precursor; sequence EEESGR.

Belongs to the neurotoxin 19 (CSTX) family. 10 (U11-Lctx) subfamily. In terms of processing, contains 4 disulfide bonds. In terms of tissue distribution, expressed by the venom gland.

The protein localises to the secreted. This is U11-lycotoxin-Ls1b from Lycosa singoriensis (Wolf spider).